The following is a 242-amino-acid chain: Small ribosomal subunit protein eS1 (242 aa).

The protein belongs to the eukaryotic ribosomal protein eS1 family. In terms of assembly, component of the small ribosomal subunit. Mature ribosomes consist of a small (40S) and a large (60S) subunit. The 40S subunit contains about 33 different proteins and 1 molecule of RNA (18S). The 60S subunit contains about 49 different proteins and 3 molecules of RNA (25S, 5.8S and 5S).

The protein localises to the cytoplasm. This chain is Small ribosomal subunit protein eS1, found in Lodderomyces elongisporus (strain ATCC 11503 / CBS 2605 / JCM 1781 / NBRC 1676 / NRRL YB-4239) (Yeast).